Here is a 58-residue protein sequence, read N- to C-terminus: Ribulose bisphosphate carboxylase large chain (58 aa).

Residues 1–2 constitute a propeptide that is removed on maturation; the sequence is MS. Pro3 carries the N-acetylproline modification. The residue at position 14 (Lys14) is an N6,N6,N6-trimethyllysine.

This sequence belongs to the RuBisCO large chain family. Type I subfamily. As to quaternary structure, heterohexadecamer of 8 large chains and 8 small chains.

The protein resides in the plastid. Its subcellular location is the chloroplast. It catalyses the reaction 2 (2R)-3-phosphoglycerate + 2 H(+) = D-ribulose 1,5-bisphosphate + CO2 + H2O. The catalysed reaction is D-ribulose 1,5-bisphosphate + O2 = 2-phosphoglycolate + (2R)-3-phosphoglycerate + 2 H(+). Its function is as follows. RuBisCO catalyzes two reactions: the carboxylation of D-ribulose 1,5-bisphosphate, the primary event in carbon dioxide fixation, as well as the oxidative fragmentation of the pentose substrate in the photorespiration process. Both reactions occur simultaneously and in competition at the same active site. The chain is Ribulose bisphosphate carboxylase large chain (rbcL) from Euphorbia characias (Albanian spurge).